A 134-amino-acid chain; its full sequence is Phosphoribosyl-AMP cyclohydrolase (134 aa).

Aspartate 80 is a Mg(2+) binding site. Cysteine 81 provides a ligand contact to Zn(2+). Residues aspartate 82 and aspartate 84 each coordinate Mg(2+). Zn(2+) contacts are provided by cysteine 98 and cysteine 105.

The protein belongs to the PRA-CH family. As to quaternary structure, homodimer. Requires Mg(2+) as cofactor. Zn(2+) serves as cofactor.

It is found in the cytoplasm. The enzyme catalyses 1-(5-phospho-beta-D-ribosyl)-5'-AMP + H2O = 1-(5-phospho-beta-D-ribosyl)-5-[(5-phospho-beta-D-ribosylamino)methylideneamino]imidazole-4-carboxamide. It functions in the pathway amino-acid biosynthesis; L-histidine biosynthesis; L-histidine from 5-phospho-alpha-D-ribose 1-diphosphate: step 3/9. Functionally, catalyzes the hydrolysis of the adenine ring of phosphoribosyl-AMP. The sequence is that of Phosphoribosyl-AMP cyclohydrolase from Herminiimonas arsenicoxydans.